Consider the following 321-residue polypeptide: Lipoyl synthase (321 aa).

[4Fe-4S] cluster-binding residues include cysteine 68, cysteine 73, cysteine 79, cysteine 94, cysteine 98, cysteine 101, and serine 308. Residues 80-297 (FNHGTATFMI…KAEAMAMGFT (218 aa)) enclose the Radical SAM core domain.

This sequence belongs to the radical SAM superfamily. Lipoyl synthase family. It depends on [4Fe-4S] cluster as a cofactor.

Its subcellular location is the cytoplasm. It catalyses the reaction [[Fe-S] cluster scaffold protein carrying a second [4Fe-4S](2+) cluster] + N(6)-octanoyl-L-lysyl-[protein] + 2 oxidized [2Fe-2S]-[ferredoxin] + 2 S-adenosyl-L-methionine + 4 H(+) = [[Fe-S] cluster scaffold protein] + N(6)-[(R)-dihydrolipoyl]-L-lysyl-[protein] + 4 Fe(3+) + 2 hydrogen sulfide + 2 5'-deoxyadenosine + 2 L-methionine + 2 reduced [2Fe-2S]-[ferredoxin]. The protein operates within protein modification; protein lipoylation via endogenous pathway; protein N(6)-(lipoyl)lysine from octanoyl-[acyl-carrier-protein]: step 2/2. Its function is as follows. Catalyzes the radical-mediated insertion of two sulfur atoms into the C-6 and C-8 positions of the octanoyl moiety bound to the lipoyl domains of lipoate-dependent enzymes, thereby converting the octanoylated domains into lipoylated derivatives. This Enterobacter sp. (strain 638) protein is Lipoyl synthase.